Consider the following 483-residue polypeptide: Glycogen synthase (483 aa).

Residue lysine 15 participates in ADP-alpha-D-glucose binding.

Belongs to the glycosyltransferase 1 family. Bacterial/plant glycogen synthase subfamily.

The catalysed reaction is [(1-&gt;4)-alpha-D-glucosyl](n) + ADP-alpha-D-glucose = [(1-&gt;4)-alpha-D-glucosyl](n+1) + ADP + H(+). Its pathway is glycan biosynthesis; glycogen biosynthesis. Functionally, synthesizes alpha-1,4-glucan chains using ADP-glucose. In Alkalilimnicola ehrlichii (strain ATCC BAA-1101 / DSM 17681 / MLHE-1), this protein is Glycogen synthase.